Here is a 424-residue protein sequence, read N- to C-terminus: GTPase Obg (424 aa).

Residues 1 to 158 (MFIDTAKIFV…RWIKLELKLL (158 aa)) enclose the Obg domain. One can recognise an OBG-type G domain in the interval 159–331 (ADVGLIGFPN…LMKEAARLLS (173 aa)). Residues 165 to 172 (GFPNVGKS), 190 to 194 (FTTLK), 212 to 215 (DIPG), 282 to 285 (NKSD), and 312 to 314 (SAA) each bind GTP. The Mg(2+) site is built by Ser-172 and Thr-192. In terms of domain architecture, OCT spans 345 to 424 (RFIEEEKRFT…LNDFEFDFLL (80 aa)).

This sequence belongs to the TRAFAC class OBG-HflX-like GTPase superfamily. OBG GTPase family. In terms of assembly, monomer. The cofactor is Mg(2+).

The protein localises to the cytoplasm. Functionally, an essential GTPase which binds GTP, GDP and possibly (p)ppGpp with moderate affinity, with high nucleotide exchange rates and a fairly low GTP hydrolysis rate. Plays a role in control of the cell cycle, stress response, ribosome biogenesis and in those bacteria that undergo differentiation, in morphogenesis control. The chain is GTPase Obg from Clostridium botulinum (strain Langeland / NCTC 10281 / Type F).